Consider the following 272-residue polypeptide: Phosphoglycolate phosphatase (272 aa).

Aspartate 19 (nucleophile) is an active-site residue. Mg(2+)-binding residues include aspartate 19, aspartate 21, and aspartate 182.

Belongs to the HAD-like hydrolase superfamily. CbbY/CbbZ/Gph/YieH family. The cofactor is Mg(2+).

The enzyme catalyses 2-phosphoglycolate + H2O = glycolate + phosphate. It participates in organic acid metabolism; glycolate biosynthesis; glycolate from 2-phosphoglycolate: step 1/1. Specifically catalyzes the dephosphorylation of 2-phosphoglycolate. Is involved in the dissimilation of the intracellular 2-phosphoglycolate formed during the DNA repair of 3'-phosphoglycolate ends, a major class of DNA lesions induced by oxidative stress. This Pseudomonas fluorescens (strain Pf0-1) protein is Phosphoglycolate phosphatase.